We begin with the raw amino-acid sequence, 260 residues long: MKRYKNVRNRDINGILLLDKPKGISSGLFLNKIKKLFNAKKIGHTGTLDPLATGMLPVCFGKATKLAKYLLHSDKRYKVSAQLGVSTDTFDSDGTIISVSPVQSNDYILEQCLESFIGIRNQIPPMFSSLKYRGVPLYKYARKGIYFPRKPRSIHIYNLSLIKKTENIIELDVHCSTGTYIRSIVNDIGEYLGCGAHVIELRRLSVGQYISSSMINPATLEAIFYNDSFDDVQVFCKLDAFLTPMNMIMLELANISNEKC.

His-44 contributes to the substrate binding site. The active-site Nucleophile is Asp-49. 3 residues coordinate substrate: Tyr-77, Tyr-180, and Leu-201.

It belongs to the pseudouridine synthase TruB family. Type 1 subfamily.

It catalyses the reaction uridine(55) in tRNA = pseudouridine(55) in tRNA. Functionally, responsible for synthesis of pseudouridine from uracil-55 in the psi GC loop of transfer RNAs. The sequence is that of tRNA pseudouridine synthase B from Blochmanniella pennsylvanica (strain BPEN).